Consider the following 78-residue polypeptide: Acyl carrier protein (78 aa).

Residues 2–77 (SSIEERVKKI…QATSYVEANL (76 aa)) enclose the Carrier domain. Position 37 is an O-(pantetheine 4'-phosphoryl)serine (Ser-37).

This sequence belongs to the acyl carrier protein (ACP) family. Post-translationally, 4'-phosphopantetheine is transferred from CoA to a specific serine of apo-ACP by AcpS. This modification is essential for activity because fatty acids are bound in thioester linkage to the sulfhydryl of the prosthetic group.

It localises to the cytoplasm. It functions in the pathway lipid metabolism; fatty acid biosynthesis. Its function is as follows. Carrier of the growing fatty acid chain in fatty acid biosynthesis. The protein is Acyl carrier protein of Hydrogenovibrio crunogenus (strain DSM 25203 / XCL-2) (Thiomicrospira crunogena).